The chain runs to 410 residues: Histidine--tRNA ligase (410 aa).

The protein belongs to the class-II aminoacyl-tRNA synthetase family.

Its subcellular location is the cytoplasm. It catalyses the reaction tRNA(His) + L-histidine + ATP = L-histidyl-tRNA(His) + AMP + diphosphate + H(+). The chain is Histidine--tRNA ligase from Methanoculleus marisnigri (strain ATCC 35101 / DSM 1498 / JR1).